A 468-amino-acid chain; its full sequence is Chromatin assembly factor 1 subunit B (468 aa).

WD repeat units follow at residues 11 to 52 (HDSQ…NGQN), 69 to 108 (HHEQ…TQQE), 143 to 182 (TAAA…LVCG), 185 to 224 (DHGH…AGVV), and 371 to 413 (IHYS…SRIE).

This sequence belongs to the WD repeat HIR1 family. In terms of assembly, component of chromatin assembly factor 1 (CAF-1), composed of MSI1/p50, CAC2/p60 and CAC1/p90. Interacts with RTT106.

The protein resides in the nucleus. Its function is as follows. Acts as a component of the histone chaperone complex chromatin assembly factor 1 (CAF-1), which assembles histone octamers onto replicating DNA. It performs the first step of the nucleosome assembly process, bringing newly synthesized histones H3 and H4 to replicating DNA; histones H2A/H2B can bind to this chromatin precursor subsequent to DNA replication to complete the histone octamer. Plays a role in the maintenance of heterochromatin. This Saccharomyces cerevisiae (strain ATCC 204508 / S288c) (Baker's yeast) protein is Chromatin assembly factor 1 subunit B (CAC2).